Here is a 483-residue protein sequence, read N- to C-terminus: UDP-N-acetylmuramoyl-L-alanyl-D-glutamate--2,6-diaminopimelate ligase (483 aa).

Ser-30 lines the UDP-N-acetyl-alpha-D-muramoyl-L-alanyl-D-glutamate pocket. 109 to 115 (GTNGKTT) provides a ligand contact to ATP. UDP-N-acetyl-alpha-D-muramoyl-L-alanyl-D-glutamate contacts are provided by residues 151 to 152 (TT), Ser-178, and Arg-186. The residue at position 218 (Lys-218) is an N6-carboxylysine. Residues Arg-380, 403-406 (DNPR), Gly-453, and Glu-457 contribute to the meso-2,6-diaminopimelate site. Residues 403–406 (DNPR) carry the Meso-diaminopimelate recognition motif motif.

It belongs to the MurCDEF family. MurE subfamily. Mg(2+) serves as cofactor. In terms of processing, carboxylation is probably crucial for Mg(2+) binding and, consequently, for the gamma-phosphate positioning of ATP.

The protein resides in the cytoplasm. It catalyses the reaction UDP-N-acetyl-alpha-D-muramoyl-L-alanyl-D-glutamate + meso-2,6-diaminopimelate + ATP = UDP-N-acetyl-alpha-D-muramoyl-L-alanyl-gamma-D-glutamyl-meso-2,6-diaminopimelate + ADP + phosphate + H(+). It functions in the pathway cell wall biogenesis; peptidoglycan biosynthesis. Catalyzes the addition of meso-diaminopimelic acid to the nucleotide precursor UDP-N-acetylmuramoyl-L-alanyl-D-glutamate (UMAG) in the biosynthesis of bacterial cell-wall peptidoglycan. In Chlamydia muridarum (strain MoPn / Nigg), this protein is UDP-N-acetylmuramoyl-L-alanyl-D-glutamate--2,6-diaminopimelate ligase.